The primary structure comprises 506 residues: Sucrose transport protein SUT3 (506 aa).

Over 1-20 (MAVDMELDGGGDGKGKAPPQ) the chain is Cytoplasmic. A helical transmembrane segment spans residues 21-41 (ISLSGLFLACMVAGGVQYGWA). Residues 42–54 (LQLSLLTPYIQTL) lie on the Extracellular side of the membrane. Residues 55–75 (GIPHALTSVMWLCGPIAGLIV) traverse the membrane as a helical segment. Residues 76–94 (QPCVGLYSDKCTSSLGRRR) lie on the Cytoplasmic side of the membrane. Residues 95–115 (PFILTGCIIICISVIVIGFSS) traverse the membrane as a helical segment. Topologically, residues 116–135 (DIGYALGDATEDCKVYRGPR) are extracellular. A helical membrane pass occupies residues 136 to 156 (YHAAAAFILGFWLLDFSNNTV). Residues 157–171 (QGPARALMADLSGRH) are Cytoplasmic-facing. The helical transmembrane segment at 172–192 (GPSAANAIFCSWMALGNILGY) threads the bilayer. Residues 193–220 (SSGSTNDWHKWFPFLMTRACCEACANLK) are Extracellular-facing. Residues 221-241 (AAFLVAVVFLGLSTAVTMVFA) form a helical membrane-spanning segment. Residues 242 to 275 (REVALDPVAAAKRNEGEASGPLAVFKGMKNLPVG) lie on the Cytoplasmic side of the membrane. Residues 276–296 (MPSVLIVTGLTWLSWFPFILF) form a helical membrane-spanning segment. Residues 297-327 (DTDWMGREIYHGRPDGSPAEVTAFQEGVRQG) are Extracellular-facing. Residues 328–348 (AFGLLLNSIVLGISSFLIEPM) form a helical membrane-spanning segment. At 349-355 (CRRLGAR) the chain is on the cytoplasmic side. A helical transmembrane segment spans residues 356-376 (AVWVMSSAVVCVAMAAVSVLS). At 377–404 (AWSLGDFGGSVQDAARAPAEEGGVRASA) the chain is on the extracellular side. The chain crosses the membrane as a helical span at residues 405-425 (LALFVFLGLPFAVLCSVPFAV). The Cytoplasmic segment spans residues 426–441 (TAQLTASRGGGQGLCT). The helical transmembrane segment at 442 to 462 (GVLNISIVVPQMAIALGAGPW) threads the bilayer. Residues 463 to 470 (DELFGEGN) are Extracellular-facing. Residues 471–491 (IPAFAMASVFAAAAAAAGVVL) traverse the membrane as a helical segment. The Cytoplasmic portion of the chain corresponds to 492–506 (LPKVSVRSVSMAGGH).

It belongs to the glycoside-pentoside-hexuronide (GPH) cation symporter transporter (TC 2.A.2.4) family. Homodimer.

It localises to the cell membrane. It participates in glycan biosynthesis; sucrose metabolism. Responsible for the transport of sucrose into the cell, with the concomitant uptake of protons (symport system). May also transport other glucosides. In Oryza sativa subsp. indica (Rice), this protein is Sucrose transport protein SUT3 (SUT3).